Here is a 270-residue protein sequence, read N- to C-terminus: 3-phenylpropionate-dihydrodiol/cinnamic acid-dihydrodiol dehydrogenase (270 aa).

10-34 lines the NAD(+) pocket; sequence FITGGGSGLGLALVERFIEEGAQVA. Serine 143 is a substrate binding site. The active-site Proton acceptor is tyrosine 156.

This sequence belongs to the short-chain dehydrogenases/reductases (SDR) family.

The enzyme catalyses 3-(cis-5,6-dihydroxycyclohexa-1,3-dien-1-yl)propanoate + NAD(+) = 3-(2,3-dihydroxyphenyl)propanoate + NADH + H(+). The catalysed reaction is (2E)-3-(cis-5,6-dihydroxycyclohexa-1,3-dien-1-yl)prop-2-enoate + NAD(+) = (2E)-3-(2,3-dihydroxyphenyl)prop-2-enoate + NADH + H(+). It functions in the pathway aromatic compound metabolism; 3-phenylpropanoate degradation. Converts 3-phenylpropionate-dihydrodiol (PP-dihydrodiol) and cinnamic acid-dihydrodiol (CI-dihydrodiol) into 3-(2,3-dihydroxylphenyl)propanoic acid (DHPP) and 2,3-dihydroxicinnamic acid (DHCI), respectively. In Escherichia coli O7:K1 (strain IAI39 / ExPEC), this protein is 3-phenylpropionate-dihydrodiol/cinnamic acid-dihydrodiol dehydrogenase.